We begin with the raw amino-acid sequence, 215 residues long: Glycerol-3-phosphate acyltransferase (215 aa).

A run of 6 helical transmembrane segments spans residues 3–23 (LILL…LWIG), 42–61 (TNTF…LIDI), 68–90 (TLLP…FAVL), 110–130 (AGVL…VFVL), 134–154 (LFSM…ISVL), and 162–182 (LLPG…AIII).

It belongs to the PlsY family. In terms of assembly, probably interacts with PlsX.

The protein localises to the cell membrane. The enzyme catalyses an acyl phosphate + sn-glycerol 3-phosphate = a 1-acyl-sn-glycero-3-phosphate + phosphate. Its pathway is lipid metabolism; phospholipid metabolism. Functionally, catalyzes the transfer of an acyl group from acyl-phosphate (acyl-PO(4)) to glycerol-3-phosphate (G3P) to form lysophosphatidic acid (LPA). This enzyme utilizes acyl-phosphate as fatty acyl donor, but not acyl-CoA or acyl-ACP. The sequence is that of Glycerol-3-phosphate acyltransferase from Streptococcus equi subsp. zooepidemicus (strain MGCS10565).